A 223-amino-acid polypeptide reads, in one-letter code: UPF0502 protein Sbal_1765 (223 aa).

Belongs to the UPF0502 family.

This chain is UPF0502 protein Sbal_1765, found in Shewanella baltica (strain OS155 / ATCC BAA-1091).